An 845-amino-acid chain; its full sequence is MQVTSLLILVCFIAAFQVFSRASSPVNCKWDSYGPWSECNGCTKTQTRRRSVAVYGQYGGYPCEGSAFETQSCKPERGCPTEEGCGDRFRCFSGQCISKSLVCNGDPDCEEDGADEDKCENVANPSCNIDKPPPNIELTGYGYNVVTGQGKKRVINTKSFGGQCRKVFSGDGKDFYRLSGNILSYTFQVKVDNDFNYEFYNSSWSYIKHTSTEQNTFYSWKGLFSHSRNTYGHGSAKEEIDTKMKSYKLLVVQNTVEVAQFTNNNPEFLQVAEPFWKELSHLPTLYDYSAYRRLIDQYGTHYLQSGSLGGEYRVLFYVDSGSAKETGFQSDQDNACSSADFQFLFTSSADQRCMKQLETEKSTSGNKGRLLRGKPLVRGGDSGFVADLSFLDLDNPAGNKQRYSSWAGSVTRLPQVIKEKLAPLYELVKEVPCASVKRLYLKRAIEEYFDEFDPCHCRPCQNGGLAIVVETQCQCLCKPYTFGSACEQGVLVGDQAGGVDGGWNCWSSWSPCVQGKRTRSRECNNPPPRDDGKSCLGETTESKQCEDQDLEKLRLLEPHCFHSSLAPKEFCLSPPALKDGFVQGEGTMVPVGQSVVYACDEGYSLIGDPVARCGEDLQWLVGEMHCQKLACVLPGEMNGMQSHPQKPFYMVGEKVTLSCVGGMSLEGPSTLLCGSSLKWSPELKDAKCVQKATSTPPPAAPACQPWEKLQNSKCICKMPYECGSSLDVCARDESRNKILSLTICKMHVVHCHKRNYTLVGKESCTLPSPAEKVCGACPIWSKCDAQNGKCICREASECQTAGYRICVEVNGKEETMSECEAGILRCRGQSISITAIKPCAEEAAQ.

Residues 1-22 form the signal peptide; that stretch reads MQVTSLLILVCFIAAFQVFSRA. The TSP type-1 1 domain occupies 27-80; sequence NCKWDSYGPWSECNGCTKTQTRRRSVAVYGQYGGYPCEGSAFETQSCKPERGCP. Cystine bridges form between Cys28-Cys63, Cys39-Cys73, Cys42-Cys79, Cys85-Cys96, Cys91-Cys109, and Cys103-Cys119. In terms of domain architecture, LDL-receptor class A spans 84–120; it reads GCGDRFRCFSGQCISKSLVCNGDPDCEEDGADEDKCE. The MACPF domain occupies 122–456; that stretch reads VANPSCNIDK…EYFDEFDPCH (335 aa). Asn124 carries an N-linked (GlcNAc...) asparagine glycan. Cys127 and Cys164 are disulfide-bonded. A glycan (N-linked (GlcNAc...) asparagine) is linked at Asn201. Cystine bridges form between Cys336–Cys353, Cys433–Cys560, Cys455–Cys505, Cys457–Cys473, Cys460–Cys475, Cys477–Cys486, Cys512–Cys545, Cys523–Cys535, Cys571–Cys613, Cys599–Cys626, Cys631–Cys673, Cys659–Cys688, Cys703–Cys714, Cys716–Cys751, Cys722–Cys744, Cys729–Cys764, Cys774–Cys783, Cys777–Cys790, Cys792–Cys826, Cys798–Cys819, and Cys806–Cys839. The EGF-like domain maps to 457–487; sequence CRPCQNGGLAIVVETQCQCLCKPYTFGSACE. The TSP type-1 2 domain occupies 500–549; the sequence is DGGWNCWSSWSPCVQGKRTRSRECNNPPPRDDGKSCLGETTESKQCEDQD. CCP stretches follow at residues 545–615 and 616–693; these read CEDQ…RCGE and DLQW…QKAT. Sushi domains lie at 569–628 and 629–690; these read EFCL…HCQK and LACV…KCVQ. 2 factor I module (FIM) regions span residues 695-771 and 772-844; these read TPPP…SPAE and KVCG…EEAA. The N-linked (GlcNAc...) asparagine glycan is linked to Asn755.

The protein belongs to the complement C6/C7/C8/C9 family. Monomer or dimer; as a C5b-7 complex it can also form multimeric rosettes. Component of the membrane attack complex (MAC), composed of complement C5b, C6, C7, C8A, C8B, C8G and multiple copies of the pore-forming subunit C9. C-, N- and O-glycosylated. O-glycosylated with core 1 or possibly core 8 glycans.

It is found in the secreted. The protein resides in the target cell membrane. Membrane attack complex (MAC) assembly is inhibited by CD59, thereby protecting self-cells from damage during complement activation. MAC assembly is also inhibited by clusterin (CLU) chaperones that inhibit polymerization of C9. Component of the membrane attack complex (MAC), a multiprotein complex activated by the complement cascade, which inserts into a target cell membrane and forms a pore, leading to target cell membrane rupture and cell lysis. The MAC is initiated by proteolytic cleavage of C5 into complement C5b in response to the classical, alternative, lectin and GZMK complement pathways. The complement pathways consist in a cascade of proteins that leads to phagocytosis and breakdown of pathogens and signaling that strengthens the adaptive immune system. C7 serves as a membrane anchor. During MAC assembly, associates with C5b and C6 to form the C5b-7 complex, a key lipophilic precursor of the MAC complex, which associates with the outer leaflet and reduces the energy for membrane bending. The protein is Complement component C7 of Mus musculus (Mouse).